A 197-amino-acid polypeptide reads, in one-letter code: Molybdenum cofactor guanylyltransferase (197 aa).

Residues 10–12 (LAG), Lys-23, Asp-69, and Asp-99 contribute to the GTP site. Mg(2+) is bound at residue Asp-99.

It belongs to the MobA family. In terms of assembly, monomer. It depends on Mg(2+) as a cofactor.

Its subcellular location is the cytoplasm. It catalyses the reaction Mo-molybdopterin + GTP + H(+) = Mo-molybdopterin guanine dinucleotide + diphosphate. In terms of biological role, transfers a GMP moiety from GTP to Mo-molybdopterin (Mo-MPT) cofactor (Moco or molybdenum cofactor) to form Mo-molybdopterin guanine dinucleotide (Mo-MGD) cofactor. The polypeptide is Molybdenum cofactor guanylyltransferase (Serratia proteamaculans (strain 568)).